Reading from the N-terminus, the 98-residue chain is Defensin-A1 (98 aa).

A signal peptide spans 1-19 (MQTLSFLLALLFLVAQTPA). Positions 20-62 (QPTGEGEKGGTIQEPEATEAQDTAAVLMAAGAADGDDSDTKQL) are excised as a propeptide. 3 cysteine pairs are disulfide-bonded: C67/C94, C69/C83, and C73/C93. A propeptide spanning residues 97-98 (IK) is cleaved from the precursor.

This sequence belongs to the alpha-defensin family. Highly expressed in intestine, and expressed at lower levels in lung and spleen.

The protein localises to the secreted. Has antimicrobial activity. The chain is Defensin-A1 from Ornithorhynchus anatinus (Duckbill platypus).